The following is a 155-amino-acid chain: Protein U1 (155 aa).

The protein belongs to the nanovirus U1 protein family.

The chain is Protein U1 (DNA-U1) from Cicer arietinum (Chickpea).